Reading from the N-terminus, the 154-residue chain is MAARMCCKLDPARDVLCLRPIGAESRGRPLPGPLGAVPPSSPSAVPADDGSHLSLRGLPVCSFSSAGPCALRFTSARRMETTVNAPWSLPTVLHKRTLGLSGWSMTWIEEYIKDCVFKDWEELGEEIRLKVFVLGGCRHKLVCSPAPCNFFTSA.

The tract at residues 28-50 (RPLPGPLGAVPPSSPSAVPADDG) is disordered. The segment covering 33–48 (PLGAVPPSSPSAVPAD) has biased composition (low complexity). The tract at residues 68-117 (PCALRFTSARRMETTVNAPWSLPTVLHKRTLGLSGWSMTWIEEYIKDCVF) is mitochondrial targeting sequence.

This sequence belongs to the orthohepadnavirus protein X family. In terms of assembly, may form homodimer. May interact with host CEBPA, CFLAR, CREB1, DDB1, E4F1, HBXIP, HSPD1/HSP60, NFKBIA, POLR2E and SMAD4. Interacts with host SMC5-SMC6 complex and induces its degradation. Interacts with host TRPC4AP; leading to prevent ubiquitination of TRPC4AP. Interacts with host PLSCR1; this interaction promotes ubiquitination and degradation of HBx and impairs HBx-mediated cell proliferation. A fraction may be phosphorylated in insect cells and HepG2 cells, a human hepatoblastoma cell line. Phosphorylated in vitro by host protein kinase C or mitogen-activated protein kinase. N-acetylated in insect cells.

Its subcellular location is the host cytoplasm. The protein resides in the host nucleus. It localises to the host mitochondrion. In terms of biological role, multifunctional protein that plays a role in silencing host antiviral defenses and promoting viral transcription. Does not seem to be essential for HBV infection. May be directly involved in development of cirrhosis and liver cancer (hepatocellular carcinoma). Most of cytosolic activities involve modulation of cytosolic calcium. The effect on apoptosis is controversial depending on the cell types in which the studies have been conducted. May induce apoptosis by localizing in mitochondria and causing loss of mitochondrial membrane potential. May also modulate apoptosis by binding host CFLAR, a key regulator of the death-inducing signaling complex (DISC). Promotes viral transcription by using the host E3 ubiquitin ligase DDB1 to target the SMC5-SMC6 complex to proteasomal degradation. This host complex would otherwise bind to viral episomal DNA, and prevents its transcription. Moderately stimulates transcription of many different viral and cellular transcription elements. Promoters and enhancers stimulated by HBx contain DNA binding sites for NF-kappa-B, AP-1, AP-2, c-EBP, ATF/CREB, or the calcium-activated factor NF-AT. The protein is Protein X of Homo sapiens (Human).